The chain runs to 144 residues: Putative pre-16S rRNA nuclease (144 aa).

The protein belongs to the YqgF nuclease family.

The protein resides in the cytoplasm. Could be a nuclease involved in processing of the 5'-end of pre-16S rRNA. This chain is Putative pre-16S rRNA nuclease, found in Lacticaseibacillus casei (strain BL23) (Lactobacillus casei).